Reading from the N-terminus, the 349-residue chain is MKIALDVMGGDNAPDINVDGAKRALQDFPLIEKIYLVGREETVRSSCDRWGLSGPRVEIVPAAEVVEMNESGLLAVRKKKNSSMSISVDLVKSGDADAVVSAGNTGAAVAAATVKLRLLDGVERAGIVTQLPNEFGVCNVTDTGANPDAKPRHLVGYAVMASILARSVYGKQMPKVGVMSNGSEDEKGTDFTKGTFCLLKHLEERGALPFKFVGNVEGHDLFEHEIDVALTDGFTGNVLLKTCEATAKAFSKWLKEELKANPFRMVGAACASGAFRAMKARLSADSVGGSPLLGVRGVTIIAHGSSTPVAIRNALRVSMEMVQQGVNPLIEEEMARLGTIPEVAEVYPK.

It belongs to the PlsX family. Homodimer. Probably interacts with PlsY.

It localises to the cytoplasm. The catalysed reaction is a fatty acyl-[ACP] + phosphate = an acyl phosphate + holo-[ACP]. It participates in lipid metabolism; phospholipid metabolism. Its function is as follows. Catalyzes the reversible formation of acyl-phosphate (acyl-PO(4)) from acyl-[acyl-carrier-protein] (acyl-ACP). This enzyme utilizes acyl-ACP as fatty acyl donor, but not acyl-CoA. This is Phosphate acyltransferase from Akkermansia muciniphila (strain ATCC BAA-835 / DSM 22959 / JCM 33894 / BCRC 81048 / CCUG 64013 / CIP 107961 / Muc).